We begin with the raw amino-acid sequence, 350 residues long: Ketol-acid reductoisomerase (NADP(+)) (350 aa).

The KARI N-terminal Rossmann domain maps to 4 to 187 (VSITTDYSRM…GGARANIIKT (184 aa)). NADP(+)-binding positions include 30 to 33 (YGSQ), arginine 53, threonine 58, and 88 to 91 (DMVQ). Histidine 113 is an active-site residue. Glycine 139 contacts NADP(+). In terms of domain architecture, KARI C-terminal knotted spans 188–333 (TFKEETETDL…KQLRAKMVWL (146 aa)). 4 residues coordinate Mg(2+): aspartate 196, glutamate 200, glutamate 232, and glutamate 236. Serine 257 contacts substrate.

The protein belongs to the ketol-acid reductoisomerase family. Mg(2+) is required as a cofactor.

It carries out the reaction (2R)-2,3-dihydroxy-3-methylbutanoate + NADP(+) = (2S)-2-acetolactate + NADPH + H(+). The enzyme catalyses (2R,3R)-2,3-dihydroxy-3-methylpentanoate + NADP(+) = (S)-2-ethyl-2-hydroxy-3-oxobutanoate + NADPH + H(+). Its pathway is amino-acid biosynthesis; L-isoleucine biosynthesis; L-isoleucine from 2-oxobutanoate: step 2/4. It participates in amino-acid biosynthesis; L-valine biosynthesis; L-valine from pyruvate: step 2/4. In terms of biological role, involved in the biosynthesis of branched-chain amino acids (BCAA). Catalyzes an alkyl-migration followed by a ketol-acid reduction of (S)-2-acetolactate (S2AL) to yield (R)-2,3-dihydroxy-isovalerate. In the isomerase reaction, S2AL is rearranged via a Mg-dependent methyl migration to produce 3-hydroxy-3-methyl-2-ketobutyrate (HMKB). In the reductase reaction, this 2-ketoacid undergoes a metal-dependent reduction by NADPH to yield (R)-2,3-dihydroxy-isovalerate. In Xylella fastidiosa (strain Temecula1 / ATCC 700964), this protein is Ketol-acid reductoisomerase (NADP(+)).